Reading from the N-terminus, the 214-residue chain is Protein OPG176 (214 aa).

This sequence belongs to the orthopoxvirus OPG176 family. In terms of assembly, tetramer. Interacts with host MYD88, TRF4, TICAM2 and MAL.

Its function is as follows. BCL2-like protein which disrupts the host immune response by inhibiting the TLR4 signaling pathway leading to NF-kappa-B activation. Acts close to the plasma membrane and targets several host TIR-domain containing adapter proteins including MYD88, TIRAP, TRIF and TICAM2. In turn, blocks the host NF-kappa-B and TRIF-mediated IRF3 activation. The sequence is that of Protein OPG176 (OPG176) from Homo sapiens (Human).